We begin with the raw amino-acid sequence, 436 residues long: Adenylosuccinate synthetase (436 aa).

GTP-binding positions include 12-18 and 40-42; these read GDEGKGK and GHT. Catalysis depends on Asp-13, which acts as the Proton acceptor. Mg(2+) is bound by residues Asp-13 and Gly-40. IMP-binding positions include 13 to 16, 38 to 41, Thr-128, Arg-142, Gln-223, Thr-238, and Arg-302; these read DEGK and NAGH. His-41 acts as the Proton donor in catalysis. 298 to 304 provides a ligand contact to substrate; the sequence is TTTGRRR. GTP contacts are provided by residues Arg-304, 330-332, and 412-414; these read KLD and SLG.

It belongs to the adenylosuccinate synthetase family. In terms of assembly, homodimer. It depends on Mg(2+) as a cofactor.

It localises to the cytoplasm. The enzyme catalyses IMP + L-aspartate + GTP = N(6)-(1,2-dicarboxyethyl)-AMP + GDP + phosphate + 2 H(+). The protein operates within purine metabolism; AMP biosynthesis via de novo pathway; AMP from IMP: step 1/2. In terms of biological role, plays an important role in the de novo pathway of purine nucleotide biosynthesis. Catalyzes the first committed step in the biosynthesis of AMP from IMP. This Prochlorococcus marinus (strain MIT 9215) protein is Adenylosuccinate synthetase.